Consider the following 721-residue polypeptide: Polyribonucleotide nucleotidyltransferase (721 aa).

Mg(2+) contacts are provided by Asp495 and Asp501. One can recognise a KH domain in the interval Pro562–Ile621. An S1 motif domain is found at Gly631–Arg699.

It belongs to the polyribonucleotide nucleotidyltransferase family. Mg(2+) is required as a cofactor.

It localises to the cytoplasm. The enzyme catalyses RNA(n+1) + phosphate = RNA(n) + a ribonucleoside 5'-diphosphate. Its function is as follows. Involved in mRNA degradation. Catalyzes the phosphorolysis of single-stranded polyribonucleotides processively in the 3'- to 5'-direction. The chain is Polyribonucleotide nucleotidyltransferase from Prochlorococcus marinus subsp. pastoris (strain CCMP1986 / NIES-2087 / MED4).